A 591-amino-acid polypeptide reads, in one-letter code: Putative F-box protein At1g32140 (591 aa).

The region spanning 2–49 (TMMSDLSLDLVEEILCRVPITSLKAVRSSCKLWNVLSKNRILCKTEAR) is the F-box domain. Residues 567 to 581 (AGRKRKEKKTKRKSK) are compositionally biased toward basic residues. The disordered stretch occupies residues 567–591 (AGRKRKEKKTKRKSKDKQMKLSNKV).

This chain is Putative F-box protein At1g32140, found in Arabidopsis thaliana (Mouse-ear cress).